The sequence spans 505 residues: MYRKLAVISAFLAAARAQQVCTQQAETHPPLTWQKCTASGCTPQQGSVVLDANWRWTHDTKSTTNCYDGNTWSSTLCPDDATCAKNCCLDGANYSGTYGVTTSGDALTLQFVTASNVGSRLYLMANDSTYQEFTLSGNEFSFDVDVSQLPCGLNGALYFVSMDADGGQSKYPGNAAGAKYGTGYCDSQCPRDLKFINGQANVEGWEPSSNNANTGVGGHGSCCSEMDIWEANSISEALTPHPCETVGQTMCSGDSCGGTYSNDRYGGTCDPDGCDWNPYRLGNTSFYGPGSSFALDTTKKLTVVTQFATDGSISRYYVQNGVKFQQPNAQVGSYSGNTINTDYCAAEQTAFGGTSFTDKGGLAQINKAFQGGMVLVMSLWDDYAVNMLWLDSTYPTNATASTPGAKRGSCSTSSGVPAQVEAQSPNSKVIYSNIRFGPIGSTGGNTGSNPPGTSTTRAPPSSTGSSPTATQTHYGQCGGTGWTGPTRCASGYTCQVLNPFYSQCL.

The signal sequence occupies residues 1–17 (MYRKLAVISAFLAAARA). Residue Q18 is modified to Pyrrolidone carboxylic acid. Residues 18–449 (QQVCTQQAET…GSTGGNTGSN (432 aa)) form a catalytic region. Intrachain disulfides connect C21–C88, C36–C41, C66–C87, and C77–C83. 2 N-linked (GlcNAc...) asparagine glycosylation sites follow: N93 and N126. 6 disulfides stabilise this stretch: C151-C410, C185-C223, C189-C222, C243-C269, C251-C256, and C274-C344. The Nucleophile role is filled by E225. Catalysis depends on E230, which acts as the Proton donor/acceptor. N-linked (GlcNAc...) asparagine glycans are attached at residues N283 and N397. 2 disordered regions span residues 399-423 (TAST…VEAQ) and 440-472 (GSTG…ATQT). The segment covering 409–423 (SCSTSSGVPAQVEAQ) has biased composition (polar residues). The segment covering 447-470 (GSNPPGTSTTRAPPSSTGSSPTAT) has biased composition (low complexity). Residues 450-468 (PPGTSTTRAPPSSTGSSPT) are linker. Residues 469-505 (ATQTHYGQCGGTGWTGPTRCASGYTCQVLNPFYSQCL) form the CBM1 domain.

The protein belongs to the glycosyl hydrolase 7 (cellulase C) family. O-glycosylated. O-glycosylation of the cellulase linker provides protection from proteolysis. Linker glycans also contribute to binding affinity of cellobiohydrolases to cellulose.

Its subcellular location is the secreted. It carries out the reaction Hydrolysis of (1-&gt;4)-beta-D-glucosidic linkages in cellulose and cellotetraose, releasing cellobiose from the non-reducing ends of the chains.. Exocellobiohydrolases (CBH) that catalyzes the hydrolysis of 1,4-beta-D-glucosidic bonds in cellulose to release the disaccharide cellobiose. The degradation of cellulose involves an interplay between different cellulolytic enzymes. Hydrolysis starts with endoglucanases (EGs), which cut internal beta-1,4-glucosidic bonds in cellulose to reduce the polymerization degree of the substrate and create new chain ends for exocellobiohydrolases (CBHs). The CBHs release the disaccharide cellobiose from the non-reducing end of the cellulose polymer chain. Finally, beta-1,4-glucosidases hydrolyze the cellobiose and other short cello-oligosaccharides into glucose units. This Trichoderma harzianum (Hypocrea lixii) protein is Exoglucanase 1 (cbh1).